An 82-amino-acid chain; its full sequence is Delta-actitoxin-Aeq2b 3 (82 aa).

A signal peptide spans 1-19 (MNRLMILVFAAVILALASA). A propeptide spanning residues 20–26 (DEDVDIT) is cleaved from the precursor. 3 disulfide bridges follow: cysteine 32-cysteine 79, cysteine 34-cysteine 69, and cysteine 62-cysteine 80.

It belongs to the sea anemone sodium channel inhibitory toxin family. Type I subfamily.

The protein localises to the secreted. Its subcellular location is the nematocyst. Functionally, binds specifically to voltage-gated sodium channels (Nav), thereby delaying their inactivation during signal transduction. Causes death to crabs. This is Delta-actitoxin-Aeq2b 3 from Actinia equina (Beadlet anemone).